The chain runs to 614 residues: Nuclear receptor subfamily 1 group D member 1 (614 aa).

The span at 1–12 shows a compositional bias: polar residues; the sequence is MTTLDSNNNTGG. The required for phosphorylation by CSNK1E and cytoplasmic localization stretch occupies residues 1–70; the sequence is MTTLDSNNNT…TQDPARSFGS (70 aa). Residues 1-119 are disordered; that stretch reads MTTLDSNNNT…SSRVSPSKST (119 aa). The tract at residues 1–128 is modulating; it reads MTTLDSNNNT…TSNITKLNGM (128 aa). The span at 14 to 34 shows a compositional bias: low complexity; sequence ITYIGSSGSSPSRTSPESLYS. The segment covering 35-48 has biased composition (polar residues); the sequence is DNSNGSFQSLTQGC. The crucial for activation of GJA1 stretch occupies residues 49–284; it reads PTYFPPSPTG…PPRSPSPEPT (236 aa). A phosphoserine; by GSK3-beta mark is found at serine 55 and serine 59. A compositionally biased stretch (low complexity) spans 69 to 102; that stretch reads GSIPPSLSDDGSPSSSSSSSSSSSSFYNGSPPGS. A DNA-binding region (nuclear receptor) is located at residues 129-205; that stretch reads VLLCKVCGDV…VGMSRDAVRF (77 aa). 2 consecutive NR C4-type zinc fingers follow at residues 132-152 and 169-193; these read CKVC…CEGC and CLKN…FKKC. An N6-acetyllysine; by KAT5 mark is found at lysine 191 and lysine 192. Residues 233–243 are compositionally biased toward polar residues; that stretch reads SQCPLETSPTQ. Disordered regions lie at residues 233 to 285 and 311 to 345; these read SQCP…EPTV and PGNF…DNNT. Positions 244–261 are enriched in pro residues; sequence HPTPGPMGPSPPPAPVPS. Threonine 274 carries the post-translational modification Phosphothreonine; by CDK1. In terms of domain architecture, NR LBD spans 284–614; sequence TVEDVISQVA…KLLSFRVDAQ (331 aa). Residues 311 to 324 are compositionally biased toward polar residues; sequence PGNFNANHASGSPP. Residue lysine 400 is modified to N6-acetyllysine. A heme-binding site is contributed by cysteine 418. Lysine 591 is subject to N6-acetyllysine. Histidine 602 is a binding site for heme.

Belongs to the nuclear hormone receptor family. NR1 subfamily. In terms of assembly, binds DNA as a monomer or a homodimer. Interacts with C1D, NR2E3 and SP1. Interacts with OPHN1 (via C-terminus). Interacts with ZNHIT1. Interacts with PER2; the interaction associates PER2 to BMAL1 promoter region. Interacts with CRY1. Interacts with CCAR2. Interacts with SIAH2. Interacts with CDK1. Interacts with FBXW7. Interacts with HUWE1. Interacts with NR0B2. Interacts with NFIL3. Interacts (via domain NR LBD) with HSP90AA1 and HSP90AB1. In terms of processing, ubiquitinated, leading to its proteasomal degradation. Ubiquitinated by SIAH2; leading to its proteasomal degradation. Ubiquitinated by the SCF(FBXW7) complex when phosphorylated by CDK1 leading to its proteasomal degradation. Rapidly ubiquitinated in response to inflammatory triggers and sumoylation is a prerequisite to its ubiquitination. Sumoylated by UBE2I, desumoylated by SENP1, and sumoylation is a prerequisite to its ubiquitination. Post-translationally, phosphorylated by CSNK1E; phosphorylation enhances its cytoplasmic localization. In terms of processing, undergoes lysosome-mediated degradation in a time-dependent manner in the liver. As to expression, widely expressed. Expressed at high levels in the liver, adipose tissue, skeletal muscle and brain. Also expressed in endothelial cells (ECs), vascular smooth muscle cells (VSMCs) and macrophages. Expression oscillates diurnally in the suprachiasmatic nucleus (SCN) of the hypothalamus as well as in peripheral tissues. Expression increases during the differentiation of pre-adipocytes into mature adipocytes. Expressed at high levels in some squamous carcinoma cell lines.

The protein localises to the nucleus. Its subcellular location is the cytoplasm. It localises to the cell projection. It is found in the dendrite. The protein resides in the dendritic spine. Functionally, transcriptional repressor which coordinates circadian rhythm and metabolic pathways in a heme-dependent manner. Integral component of the complex transcription machinery that governs circadian rhythmicity and forms a critical negative limb of the circadian clock by directly repressing the expression of core clock components BMAL1, CLOCK and CRY1. Also regulates genes involved in metabolic functions, including lipid and bile acid metabolism, adipogenesis, gluconeogenesis and the macrophage inflammatory response. Acts as a receptor for heme which stimulates its interaction with the NCOR1/HDAC3 corepressor complex, enhancing transcriptional repression. Recognizes two classes of DNA response elements within the promoter of its target genes and can bind to DNA as either monomers or homodimers, depending on the nature of the response element. Binds as a monomer to a response element composed of the consensus half-site motif 5'-[A/G]GGTCA-3' preceded by an A/T-rich 5' sequence (RevRE), or as a homodimer to a direct repeat of the core motif spaced by two nucleotides (RevDR-2). Acts as a potent competitive repressor of ROR alpha (RORA) function and regulates the levels of its ligand heme by repressing the expression of PPARGC1A, a potent inducer of heme synthesis. Regulates lipid metabolism by repressing the expression of APOC3 and by influencing the activity of sterol response element binding proteins (SREBPs); represses INSIG2 which interferes with the proteolytic activation of SREBPs which in turn govern the rhythmic expression of enzymes with key functions in sterol and fatty acid synthesis. Regulates gluconeogenesis via repression of G6PC1 and PEPCK and adipocyte differentiation via repression of PPARG. Regulates glucagon release in pancreatic alpha-cells via the AMPK-NAMPT-SIRT1 pathway and the proliferation, glucose-induced insulin secretion and expression of key lipogenic genes in pancreatic-beta cells. Positively regulates bile acid synthesis by increasing hepatic expression of CYP7A1 via repression of NR0B2 and NFIL3 which are negative regulators of CYP7A1. Modulates skeletal muscle oxidative capacity by regulating mitochondrial biogenesis and autophagy; controls mitochondrial biogenesis and respiration by interfering with the STK11-PRKAA1/2-SIRT1-PPARGC1A signaling pathway. Represses the expression of SERPINE1/PAI1, an important modulator of cardiovascular disease and the expression of inflammatory cytokines and chemokines in macrophages. Represses gene expression at a distance in macrophages by inhibiting the transcription of enhancer-derived RNAs (eRNAs). Plays a role in the circadian regulation of body temperature and negatively regulates thermogenic transcriptional programs in brown adipose tissue (BAT); imposes a circadian oscillation in BAT activity, increasing body temperature when awake and depressing thermogenesis during sleep. In concert with NR2E3, regulates transcriptional networks critical for photoreceptor development and function. In addition to its activity as a repressor, can also act as a transcriptional activator. In the ovarian granulosa cells acts as a transcriptional activator of STAR which plays a role in steroid biosynthesis. In collaboration with SP1, activates GJA1 transcription in a heme-independent manner. Represses the transcription of CYP2B10, CYP4A10 and CYP4A14. Represses the transcription of CES2. Represses and regulates the circadian expression of TSHB in a NCOR1-dependent manner. Negatively regulates the protein stability of NR3C1 and influences the time-dependent subcellular distribution of NR3C1, thereby affecting its transcriptional regulatory activity. Plays a critical role in the circadian control of neutrophilic inflammation in the lung; under resting, non-stress conditions, acts as a rhythmic repressor to limit inflammatory activity whereas in the presence of inflammatory triggers undergoes ubiquitin-mediated degradation thereby relieving inhibition of the inflammatory response. Plays a key role in the circadian regulation of microglial activation and neuroinflammation; suppresses microglial activation through the NF-kappaB pathway in the central nervous system. Plays a role in the regulation of the diurnal rhythms of lipid and protein metabolism in the skeletal muscle via transcriptional repression of genes controlling lipid and amino acid metabolism in the muscle. This Homo sapiens (Human) protein is Nuclear receptor subfamily 1 group D member 1 (NR1D1).